The primary structure comprises 151 residues: Probable chemoreceptor glutamine deamidase CheD (151 aa).

It belongs to the CheD family.

It catalyses the reaction L-glutaminyl-[protein] + H2O = L-glutamyl-[protein] + NH4(+). Probably deamidates glutamine residues to glutamate on methyl-accepting chemotaxis receptors (MCPs), playing an important role in chemotaxis. This is Probable chemoreceptor glutamine deamidase CheD from Methanosarcina barkeri (strain Fusaro / DSM 804).